Reading from the N-terminus, the 79-residue chain is Large ribosomal subunit protein bL28 (79 aa).

This sequence belongs to the bacterial ribosomal protein bL28 family.

This is Large ribosomal subunit protein bL28 from Christiangramia forsetii (strain DSM 17595 / CGMCC 1.15422 / KT0803) (Gramella forsetii).